The chain runs to 249 residues: DNA polymerase sliding clamp (249 aa).

This sequence belongs to the PCNA family. In terms of assembly, homotrimer. The subunits circularize to form a toroid; DNA passes through its center. Replication factor C (RFC) is required to load the toroid on the DNA.

Sliding clamp subunit that acts as a moving platform for DNA processing. Responsible for tethering the catalytic subunit of DNA polymerase and other proteins to DNA during high-speed replication. This chain is DNA polymerase sliding clamp, found in Thermococcus sibiricus (strain DSM 12597 / MM 739).